The sequence spans 333 residues: Anthranilate phosphoribosyltransferase (333 aa).

5-phospho-alpha-D-ribose 1-diphosphate is bound by residues G81, 84–85, T89, 91–94, 109–117, and S121; these read GD, NIST, and KHGNRSVSS. G81 serves as a coordination point for anthranilate. S93 serves as a coordination point for Mg(2+). Anthranilate is bound at residue N112. Residue R167 coordinates anthranilate. Residues D225 and E226 each coordinate Mg(2+).

Belongs to the anthranilate phosphoribosyltransferase family. Homodimer. Requires Mg(2+) as cofactor.

The catalysed reaction is N-(5-phospho-beta-D-ribosyl)anthranilate + diphosphate = 5-phospho-alpha-D-ribose 1-diphosphate + anthranilate. Its pathway is amino-acid biosynthesis; L-tryptophan biosynthesis; L-tryptophan from chorismate: step 2/5. In terms of biological role, catalyzes the transfer of the phosphoribosyl group of 5-phosphorylribose-1-pyrophosphate (PRPP) to anthranilate to yield N-(5'-phosphoribosyl)-anthranilate (PRA). This Glaesserella parasuis serovar 5 (strain SH0165) (Haemophilus parasuis) protein is Anthranilate phosphoribosyltransferase.